The chain runs to 520 residues: Serine/threonine-protein kinases drp72 (520 aa).

The region spanning 20–281 (YTLQWIVGHG…NELARAVSAV (262 aa)) is the Protein kinase domain. ATP-binding positions include 26–34 (VGHGGMSTV) and Lys-49. Asp-148 serves as the catalytic Proton acceptor. Disordered stretches follow at residues 315 to 334 (ARPTTSVPASPTVLPERQEK) and 366 to 504 (SGDS…DAAD). Over residues 374-394 (TPETITQTVTPTETTTSEEPT) the composition is skewed to low complexity. Over residues 395-411 (LAPPPVQPTRQPVPTPD) the composition is skewed to pro residues. Polar residues predominate over residues 416-429 (RLPTTTQESPTRVS). The span at 440-449 (EQTTPGGQPP) shows a compositional bias: low complexity. The span at 450-460 (LSTLPTSLGWQ) shows a compositional bias: polar residues. A compositionally biased stretch (low complexity) spans 469 to 484 (QGNPNTTGNPANPGTP). A compositionally biased stretch (gly residues) spans 485–496 (GTTGGNGTGNAG).

It belongs to the protein kinase superfamily. Ser/Thr protein kinase family.

It carries out the reaction L-seryl-[protein] + ATP = O-phospho-L-seryl-[protein] + ADP + H(+). The catalysed reaction is L-threonyl-[protein] + ATP = O-phospho-L-threonyl-[protein] + ADP + H(+). The sequence is that of Serine/threonine-protein kinases drp72 from Corynebacterium efficiens (strain DSM 44549 / YS-314 / AJ 12310 / JCM 11189 / NBRC 100395).